Consider the following 247-residue polypeptide: E3 SUMO-protein ligase NSE2 (247 aa).

Methionine 1 is subject to N-acetylmethionine. Glycyl lysine isopeptide (Lys-Gly) (interchain with G-Cter in SUMO2) cross-links involve residues lysine 90 and lysine 107. A Phosphoserine modification is found at serine 116. Glycyl lysine isopeptide (Lys-Gly) (interchain with G-Cter in SUMO2) cross-links involve residues lysine 125 and lysine 130. The segment at 154-240 (VDEDIIVTQS…LRRAIENHNK (87 aa)) adopts an SP-RING-type zinc-finger fold. The Zn(2+) site is built by cysteine 185, histidine 187, cysteine 210, and cysteine 215.

Belongs to the NSE2 family. As to quaternary structure, component of the SMC5-SMC6 complex which consists at least of SMC5, SMC6, NSMCE2, NSMCE1, NSMCE4A or EID3 and NSMCE3. In terms of processing, sumoylated, possibly via autosumoylation.

The protein resides in the nucleus. It localises to the chromosome. Its subcellular location is the telomere. The protein localises to the PML body. It participates in protein modification; protein sumoylation. Its function is as follows. E3 SUMO-protein ligase component of the SMC5-SMC6 complex, a complex involved in DNA double-strand break repair by homologous recombination. Is not be required for the stability of the complex. The complex may promote sister chromatid homologous recombination by recruiting the SMC1-SMC3 cohesin complex to double-strand breaks. The complex is required for telomere maintenance via recombination in ALT (alternative lengthening of telomeres) cell lines and mediates sumoylation of shelterin complex (telosome) components which is proposed to lead to shelterin complex disassembly in ALT-associated PML bodies (APBs). Acts as an E3 ligase mediating SUMO attachment to various proteins such as SMC6L1 and TSNAX, the shelterin complex subunits TERF1, TERF2, TINF2 and TERF2IP, RAD51AP1, and maybe the cohesin components RAD21 and STAG2. Required for recruitment of telomeres to PML nuclear bodies. SUMO protein-ligase activity is required for the prevention of DNA damage-induced apoptosis by facilitating DNA repair, and for formation of APBs in ALT cell lines. Required for sister chromatid cohesion during prometaphase and mitotic progression. In Homo sapiens (Human), this protein is E3 SUMO-protein ligase NSE2 (NSMCE2).